Consider the following 390-residue polypeptide: cAMP-dependent protein kinase regulatory subunit (390 aa).

Positions 1–17 (MSASGFTSPFGANSNPF) are enriched in polar residues. Residues 1 to 81 (MSASGFTSPF…RPQNPDGYPA (81 aa)) are disordered. The dimerization and phosphorylation stretch occupies residues 1 to 129 (MSASGFTSPF…RLKKAIQGNF (129 aa)). A Phosphoserine modification is found at serine 90. Residues 130–261 (LFSH…EEVP), glutamate 208, arginine 217, 262–383 (ILST…GVEE), glutamate 329, and arginine 338 contribute to the 3',5'-cyclic AMP site.

The protein belongs to the cAMP-dependent kinase regulatory chain family. In terms of assembly, tetramer, composed of 2 regulatory (R) and 2 catalytic (C) subunits. In the presence of cAMP it dissociates into 2 active monomeric C subunits and an R dimer.

The sequence is that of cAMP-dependent protein kinase regulatory subunit (SUM1) from Pyricularia oryzae (strain 70-15 / ATCC MYA-4617 / FGSC 8958) (Rice blast fungus).